Consider the following 532-residue polypeptide: Pyruvate kinase (532 aa).

Arg63 lines the substrate pocket. Positions 65, 67, 99, and 100 each coordinate K(+). An ATP-binding site is contributed by Asn65–His68. Positions 106 and 191 each coordinate ATP. Glu256 provides a ligand contact to Mg(2+). Positions 279, 280, and 312 each coordinate substrate. Asp280 provides a ligand contact to Mg(2+).

This sequence belongs to the pyruvate kinase family. Homotetramer. Mg(2+) is required as a cofactor. The cofactor is K(+).

The catalysed reaction is pyruvate + ATP = phosphoenolpyruvate + ADP + H(+). It functions in the pathway carbohydrate degradation; glycolysis; pyruvate from D-glyceraldehyde 3-phosphate: step 5/5. The sequence is that of Pyruvate kinase (pkiA) from Agaricus bisporus (White button mushroom).